Consider the following 55-residue polypeptide: Large ribosomal subunit protein bL33 (55 aa).

Belongs to the bacterial ribosomal protein bL33 family.

The protein is Large ribosomal subunit protein bL33 of Methylacidiphilum infernorum (isolate V4) (Methylokorus infernorum (strain V4)).